Reading from the N-terminus, the 322-residue chain is Secreted effector protein SseI (322 aa).

As to quaternary structure, interacts with host IQGAP1 and host TRIP6 (thyroid receptor-interacting protein 6).

Its subcellular location is the secreted. It is found in the host cytoplasm. Effector proteins function to alter host cell physiology and promote bacterial survival in host tissues. This protein is required to maintain a long-term chronic systemic infection in mice. It inhibits normal cell migration of primary macrophages and dendritic cells, by a mechanism that involves interaction with the host factor IQGAP1, an important regulator of the cytoskeleton and cell migration. Also accelerates the systemic spread of infection from the gastrointestinal tract to the bloodstream, probably by interacting with host TRIP6. The chain is Secreted effector protein SseI (sseI) from Salmonella typhimurium (strain LT2 / SGSC1412 / ATCC 700720).